The chain runs to 376 residues: Zinc-regulated transporter 1 (376 aa).

Topologically, residues 1–50 (MSNVTTPWWKQWDPSEVTLADKTPDDVWKTCVLQGVYFGGNEYNGNLGAR) are extracellular. Residues 51–71 (ISSVFVILFVSTFFTMFPLIS) traverse the membrane as a helical segment. Topologically, residues 72–80 (TKVKRLRIP) are cytoplasmic. The helical transmembrane segment at 81 to 101 (LYVYLFAKYFGSGVIVATAFI) threads the bilayer. Residues 102–122 (HLMDPAYGAIGGTTCVGQTGN) lie on the Extracellular side of the membrane. A helical transmembrane segment spans residues 123–143 (WGLYSWCPAIMLTSLTFTFLT). Residues 144 to 216 (DLFSSVWVER…TSMDVVQSFQ (73 aa)) are Cytoplasmic-facing. Over residues 177–191 (VSSENDNENGTANGS) the composition is skewed to polar residues. A disordered region spans residues 177 to 196 (VSSENDNENGTANGSHDTKN). Residues 217-237 (AQFYAFLILEFGVIFHSVMIG) form a helical membrane-spanning segment. Residues 238–242 (LNLGS) are Extracellular-facing. The helical transmembrane segment at 243 to 263 (VGDEFSSLYPVLVFHQSFEGL) threads the bilayer. Topologically, residues 264–278 (GIGARLSAIEFPRSK) are cytoplasmic. A helical transmembrane segment spans residues 279 to 299 (RWWPWALCVAYGLTTPICVAI). Residues 300-310 (GLGVRTRYVSG) are Extracellular-facing. The helical transmembrane segment at 311–331 (SYTALVISGVLDAISAGILLY) threads the bilayer. Topologically, residues 332–354 (TGLVELLARDFIFNPQRTKDLRE) are cytoplasmic. The chain crosses the membrane as a helical span at residues 355–375 (LSFNVICTLFGAGIMALIGKW). Position 376 (Ala376) is a topological domain, extracellular.

This sequence belongs to the ZIP transporter (TC 2.A.5) family.

The protein resides in the membrane. Functionally, high-affinity zinc transport protein. The chain is Zinc-regulated transporter 1 (ZRT1) from Saccharomyces cerevisiae (strain ATCC 204508 / S288c) (Baker's yeast).